A 280-amino-acid chain; its full sequence is PsbP domain-containing protein 7, chloroplastic (280 aa).

A chloroplast-targeting transit peptide spans 1-36; the sequence is MSLKPYFSLLYSSPTNVKLSNFLIAQQPSGDLKTTP.

Belongs to the PsbP family.

Its subcellular location is the plastid. It localises to the chloroplast. The polypeptide is PsbP domain-containing protein 7, chloroplastic (PPD7) (Arabidopsis thaliana (Mouse-ear cress)).